Reading from the N-terminus, the 243-residue chain is ABC transporter arginine-binding protein 1 (243 aa).

The signal sequence occupies residues 1–19 (MKKLVLAALLASFTFGASA).

This sequence belongs to the bacterial solute-binding protein 3 family. In terms of assembly, the complex is composed of two ATP-binding proteins (ArtP), two transmembrane proteins (ArtM and ArtQ) and two solute-binding proteins (ArtJ and ArtI).

Its subcellular location is the periplasm. Part of the ABC transporter complex ArtPIQMJ involved in arginine transport. Binds L-arginine with high affinity. This Escherichia coli (strain K12) protein is ABC transporter arginine-binding protein 1 (artJ).